Here is a 271-residue protein sequence, read N- to C-terminus: Formamidopyrimidine-DNA glycosylase (271 aa).

P2 serves as the catalytic Schiff-base intermediate with DNA. E3 serves as the catalytic Proton donor. K58 (proton donor; for beta-elimination activity) is an active-site residue. Residues H92, R111, and R152 each contribute to the DNA site. Residues 237-271 (MVYGREGQACKHCGRELKHATIGQRATVWCAACQR) form an FPG-type zinc finger. Catalysis depends on R261, which acts as the Proton donor; for delta-elimination activity.

Belongs to the FPG family. Monomer. Requires Zn(2+) as cofactor.

It catalyses the reaction Hydrolysis of DNA containing ring-opened 7-methylguanine residues, releasing 2,6-diamino-4-hydroxy-5-(N-methyl)formamidopyrimidine.. It carries out the reaction 2'-deoxyribonucleotide-(2'-deoxyribose 5'-phosphate)-2'-deoxyribonucleotide-DNA = a 3'-end 2'-deoxyribonucleotide-(2,3-dehydro-2,3-deoxyribose 5'-phosphate)-DNA + a 5'-end 5'-phospho-2'-deoxyribonucleoside-DNA + H(+). Its function is as follows. Involved in base excision repair of DNA damaged by oxidation or by mutagenic agents. Acts as a DNA glycosylase that recognizes and removes damaged bases. Has a preference for oxidized purines, such as 7,8-dihydro-8-oxoguanine (8-oxoG). Has AP (apurinic/apyrimidinic) lyase activity and introduces nicks in the DNA strand. Cleaves the DNA backbone by beta-delta elimination to generate a single-strand break at the site of the removed base with both 3'- and 5'-phosphates. The polypeptide is Formamidopyrimidine-DNA glycosylase (Xanthomonas campestris pv. campestris (strain B100)).